Consider the following 365-residue polypeptide: Ribosomal RNA large subunit methyltransferase F (365 aa).

The segment at 1–50 (MSKPAVKSVPSATAKTATRAANPRQKAKAPKQAKPEGKGRAKPSKDKPRA) is disordered. The span at 33–50 (AKPEGKGRAKPSKDKPRA) shows a compositional bias: basic and acidic residues.

It belongs to the methyltransferase superfamily. METTL16/RlmF family.

It is found in the cytoplasm. The catalysed reaction is adenosine(1618) in 23S rRNA + S-adenosyl-L-methionine = N(6)-methyladenosine(1618) in 23S rRNA + S-adenosyl-L-homocysteine + H(+). Its function is as follows. Specifically methylates the adenine in position 1618 of 23S rRNA. This chain is Ribosomal RNA large subunit methyltransferase F, found in Shewanella baltica (strain OS195).